A 349-amino-acid polypeptide reads, in one-letter code: N-acetyltaurine hydrolase (349 aa).

6 residues coordinate a divalent metal cation: H26, H28, E169, H201, H230, and D298.

The protein belongs to the metallo-dependent hydrolases superfamily. Phosphotriesterase family. A divalent metal cation serves as cofactor.

It is found in the cytoplasm. The protein resides in the cytosol. The enzyme catalyses N-acetyltaurine + H2O = taurine + acetate. The catalysed reaction is N-propanoyltaurine + H2O = propanoate + taurine. It carries out the reaction N-acetyl-L-methionine + H2O = L-methionine + acetate. It catalyses the reaction N-acetyl-L-isoleucine + H2O = L-isoleucine + acetate. The enzyme catalyses N-acetyl-L-leucine + H2O = L-leucine + acetate. The catalysed reaction is N-acetyl-L-valine + H2O = L-valine + acetate. Functionally, N-acetyltaurine hydrolase that catalyzes the hydrolysis of N-acetyltaurine into taurine and acetate. PTER also acts on other N-acetyl amino acids (Met, Ile, Leu, Val) and N-propionyltaurine, but at lower rates. In Xenopus tropicalis (Western clawed frog), this protein is N-acetyltaurine hydrolase (pter).